Reading from the N-terminus, the 161-residue chain is Crossover junction endodeoxyribonuclease RuvC (161 aa).

Residues D7, E67, and D140 contribute to the active site. Mg(2+)-binding residues include D7, E67, and D140.

Belongs to the RuvC family. As to quaternary structure, homodimer which binds Holliday junction (HJ) DNA. The HJ becomes 2-fold symmetrical on binding to RuvC with unstacked arms; it has a different conformation from HJ DNA in complex with RuvA. In the full resolvosome a probable DNA-RuvA(4)-RuvB(12)-RuvC(2) complex forms which resolves the HJ. Requires Mg(2+) as cofactor.

The protein resides in the cytoplasm. The enzyme catalyses Endonucleolytic cleavage at a junction such as a reciprocal single-stranded crossover between two homologous DNA duplexes (Holliday junction).. Functionally, the RuvA-RuvB-RuvC complex processes Holliday junction (HJ) DNA during genetic recombination and DNA repair. Endonuclease that resolves HJ intermediates. Cleaves cruciform DNA by making single-stranded nicks across the HJ at symmetrical positions within the homologous arms, yielding a 5'-phosphate and a 3'-hydroxyl group; requires a central core of homology in the junction. The consensus cleavage sequence is 5'-(A/T)TT(C/G)-3'. Cleavage occurs on the 3'-side of the TT dinucleotide at the point of strand exchange. HJ branch migration catalyzed by RuvA-RuvB allows RuvC to scan DNA until it finds its consensus sequence, where it cleaves and resolves the cruciform DNA. The polypeptide is Crossover junction endodeoxyribonuclease RuvC (Natranaerobius thermophilus (strain ATCC BAA-1301 / DSM 18059 / JW/NM-WN-LF)).